We begin with the raw amino-acid sequence, 575 residues long: SH2B adapter protein 3 (575 aa).

3 disordered regions span residues methionine 1–proline 23, arginine 83–glutamine 136, and serine 150–proline 176. A Phosphoserine modification is found at serine 13. Over residues arginine 83–glycine 93 the composition is skewed to basic and acidic residues. The span at glycine 95–proline 104 shows a compositional bias: low complexity. A phosphoserine mark is found at serine 103, serine 120, and serine 150. The span at glycine 152–alanine 174 shows a compositional bias: low complexity. Residues glutamate 194–glycine 307 form the PH domain. Residues alanine 322–glycine 346 form a disordered region. The segment covering proline 325–serine 337 has biased composition (low complexity). Serine 330 is modified (phosphoserine). The 99-residue stretch at tryptophan 364–valine 462 folds into the SH2 domain. 2 disordered regions span residues serine 503–isoleucine 525 and proline 546–leucine 575.

It belongs to the SH2B adapter family. In terms of assembly, binds to the tyrosine-phosphorylated TCR zeta chain via its SH2 domain. Post-translationally, tyrosine phosphorylated by LCK. In terms of tissue distribution, preferentially expressed by lymphoid cell lines.

Its function is as follows. Links T-cell receptor activation signal to phospholipase C-gamma-1, GRB2 and phosphatidylinositol 3-kinase. This chain is SH2B adapter protein 3 (SH2B3), found in Homo sapiens (Human).